We begin with the raw amino-acid sequence, 1103 residues long: Retinal guanylyl cyclase 1 (1103 aa).

Positions 1 to 51 (MTACARRAGGLPDPGLCGPAWWAPSLPRLPRALPRLPLLLLLLLLQPPALS) are cleaved as a signal peptide. The Extracellular portion of the chain corresponds to 52-462 (AVFTVGVLGP…PNNICGGGLE (411 aa)). N297 is a glycosylation site (N-linked (GlcNAc...) asparagine). The chain crosses the membrane as a helical span at residues 463-487 (PGLVFLGFLLVVGMGLAGAFLAHYV). Topologically, residues 488-1103 (RHRLLHMQMV…LEKARPGQFS (616 aa)) are cytoplasmic. In terms of domain architecture, Protein kinase spans 525–808 (QGSRSSLGAR…DHTFDLFKNI (284 aa)). One can recognise a Guanylate cyclase domain in the interval 880–1010 (TLYFSDIVGF…DTVNTASRME (131 aa)). The disordered stretch occupies residues 1065–1103 (PIPKPPDLQPGSSNHGISLQEIPPERRRKLEKARPGQFS).

The protein belongs to the adenylyl cyclase class-4/guanylyl cyclase family. Homodimer; requires homodimerization for guanylyl cyclase activity. Interacts with RD3; promotes the exit of GUCY2D from the endoplasmic reticulum and its trafficking to the photoreceptor outer segments. Interaction with RD3 negatively regulates guanylate cyclase activity. As to expression, retina.

The protein resides in the photoreceptor outer segment membrane. Its subcellular location is the endoplasmic reticulum membrane. It catalyses the reaction GTP = 3',5'-cyclic GMP + diphosphate. With respect to regulation, activated by GUCA1A when free calcium ions concentration is low, and inhibited by GUCA1A when free calcium ions concentration is high. Negatively regulated by RD3; inhibits the basal and GUCA1A-stimulated guanylate cyclase activity. In terms of biological role, catalyzes the synthesis of cyclic GMP (cGMP) in rods and cones of photoreceptors. Plays an essential role in phototransduction, by mediating cGMP replenishment. May also participate in the trafficking of membrane-asociated proteins to the photoreceptor outer segment membrane. The protein is Retinal guanylyl cyclase 1 (GUCY2D) of Homo sapiens (Human).